The sequence spans 910 residues: Lysine-specific demethylase 7 homolog (910 aa).

Positions methionine 1 to asparagine 11 are enriched in polar residues. 3 disordered regions span residues methionine 1–proline 58, asparagine 103–proline 162, and glutamine 183–glycine 212. Basic and acidic residues predominate over residues glutamine 25–alanine 35. The segment covering tyrosine 43–proline 58 has biased composition (polar residues). The segment covering proline 118–aspartate 130 has biased composition (basic and acidic residues). Residues glutamate 150 to serine 160 show a composition bias toward polar residues. The segment covering proline 200–arginine 210 has biased composition (basic and acidic residues). Residues serine 208–histidine 290 form a PHD-type zinc finger. The JmjC domain occupies serine 441–asparagine 612. Substrate contacts are provided by residues threonine 505 to aspartate 510, tyrosine 518, lysine 525, and histidine 580. Fe cation-binding residues include histidine 508 and aspartate 510. Fe cation is bound at residue histidine 580. 2 disordered regions span residues lysine 712–valine 790 and glutamate 864–methionine 910. The span at tyrosine 748–lysine 757 shows a compositional bias: basic residues. Residues lysine 758–proline 780 are compositionally biased toward basic and acidic residues.

This sequence belongs to the JHDM1 histone demethylase family. JHDM1D subfamily. Fe(2+) serves as cofactor. As to expression, mainly expressed in neurons. Also weakly expressed in some muscle, intestinal and hypodermal cells.

The protein localises to the nucleus. Its activity is regulated as follows. Competitively inhibited by 2-hydroxyglutarate. Its function is as follows. Histone demethylase required for nervous system development. Specifically demethylates dimethylated 'Lys-9', 'Lys-23' and 'Lys-27' (H3K9me2, H3K23me2 and H3K27me2, respectively) of histone H3, thereby playing a central role in histone code. Promotes mitochondrial stress-induced longevity. The protein is Lysine-specific demethylase 7 homolog (jmjd-1.2) of Caenorhabditis elegans.